The sequence spans 791 residues: KN motif and ankyrin repeat domain-containing protein 3 (791 aa).

Disordered stretches follow at residues 1-37, 56-181, 254-312, 401-425, and 463-514; these read MAKF…SVET, RGPA…GPAQ, ATSD…ETRE, GCTE…GDEM, and YESS…GDCE. The segment covering 25-34 has biased composition (polar residues); sequence SARSPSSPYS. A compositionally biased stretch (low complexity) spans 105–125; sequence LSPGAFPGLSLPPLSPRSLSR. A compositionally biased stretch (basic and acidic residues) spans 127-149; sequence PRVEHTLLETSRRLEQAQARERA. Residues S151, S159, S163, S166, S167, and S176 each carry the phosphoserine modification. A compositionally biased stretch (low complexity) spans 158–180; the sequence is RSPRGSGRSSPAPNPALASPGPA. Positions 180–229 form a coiled coil; it reads AQLQLVREQMAAALRRLRELEDQARALPELQEQVRALRAEKARLLAGRVQ. Composition is skewed to basic and acidic residues over residues 254-280 and 293-312; these read ATSD…RRSE and PDGE…ETRE. At S279 the chain carries Phosphoserine. The span at 401 to 410 shows a compositional bias: polar residues; that stretch reads GCTEKTTQTE. The span at 485–496 shows a compositional bias: low complexity; sequence SSSSGSDDSSGG. Residues 505-514 are compositionally biased toward basic and acidic residues; that stretch reads HNDKDAGDCE. ANK repeat units lie at residues 606–636, 640–677, 679–708, 712–742, and 746–775; these read NGNT…DVNH, AGYS…AKAS, TGQT…DVNV, DGAT…DLTI, and EGTS…SNHQ. Residues 772–783 show a composition bias toward polar residues; sequence SNHQGQSSTGSP. Residues 772–791 form a disordered region; sequence SNHQGQSSTGSPTAKECNDK.

In terms of biological role, may be involved in the control of cytoskeleton formation by regulating actin polymerization. The sequence is that of KN motif and ankyrin repeat domain-containing protein 3 from Mus musculus (Mouse).